The following is a 156-amino-acid chain: Arginine repressor (156 aa).

It belongs to the ArgR family.

The protein resides in the cytoplasm. It participates in amino-acid biosynthesis; L-arginine biosynthesis [regulation]. Regulates arginine biosynthesis genes. The chain is Arginine repressor from Citrobacter koseri (strain ATCC BAA-895 / CDC 4225-83 / SGSC4696).